The following is a 245-amino-acid chain: Probable phosphatase KPK_3500 (245 aa).

The Zn(2+) site is built by histidine 7, histidine 9, histidine 15, histidine 40, glutamate 73, histidine 101, histidine 131, aspartate 192, and histidine 194.

The protein belongs to the PHP family. As to quaternary structure, homotrimer. The cofactor is Zn(2+).

The polypeptide is Probable phosphatase KPK_3500 (Klebsiella pneumoniae (strain 342)).